Reading from the N-terminus, the 340-residue chain is Pesticidal crystal protein Cry15Aa (340 aa).

Positions 318-340 are disordered; it reads RDYDKEHICHDQAEKYERDYDKE.

Functionally, promotes colloidosmotic lysis by binding to the midgut epithelial cells of lepidopteran larvae. This chain is Pesticidal crystal protein Cry15Aa (cry15Aa), found in Bacillus thuringiensis subsp. thompsoni.